The primary structure comprises 479 residues: Ribosomal RNA small subunit methyltransferase F (479 aa).

S-adenosyl-L-methionine-binding positions include 125–131, Glu149, Asp176, and Asp194; that span reads AAAPGSK. Cys247 serves as the catalytic Nucleophile.

This sequence belongs to the class I-like SAM-binding methyltransferase superfamily. RsmB/NOP family.

It is found in the cytoplasm. It catalyses the reaction cytidine(1407) in 16S rRNA + S-adenosyl-L-methionine = 5-methylcytidine(1407) in 16S rRNA + S-adenosyl-L-homocysteine + H(+). Its function is as follows. Specifically methylates the cytosine at position 1407 (m5C1407) of 16S rRNA. In Escherichia coli (strain SE11), this protein is Ribosomal RNA small subunit methyltransferase F.